An 88-amino-acid polypeptide reads, in one-letter code: Small ribosomal subunit protein bS16 (88 aa).

This sequence belongs to the bacterial ribosomal protein bS16 family.

The chain is Small ribosomal subunit protein bS16 from Geobacter metallireducens (strain ATCC 53774 / DSM 7210 / GS-15).